The following is a 342-amino-acid chain: MATSTETISSLAQPFVHLENPINSPLVKETIRPRNDTTITPPPTQWSYLCHPRVKEVQDEVDGYFLENWKFPSFKAVRTFLDAKFSEVTCLYFPLALDDRIHFACRLLTVLFLIDDVLEHMSFADGEAYNNRLIPISRGDVLPDRTKPEEFILYDLWESMRAHDAELANEVLEPTFVFMRAQTDRARLSIHELGHYLEYREKDVGKALLSALMRFSMGLRLSADELQDMKALEANCAKQLSVVNDIYSYDKEEEASRTGHKEGAFLCSAVKVLAEESKLGIPATKRVLWSMTREWETVHDEIVAEKIASPDGCSEAAKAYMKGLEYQMSGNEQWSKTTRRYN.

Residues Asp-115, Asn-244, Ser-248, and Glu-252 each coordinate Mg(2+). Arg-340 and Tyr-341 together coordinate (2E,6E)-farnesyl diphosphate.

Belongs to the terpene synthase family. In terms of assembly, homodimer. It depends on Mg(2+) as a cofactor.

The enzyme catalyses (2E,6E)-farnesyl diphosphate = (+)-aristolochene + diphosphate. It functions in the pathway sesquiterpene biosynthesis; aristolochene biosynthesis; aristolochene from farnesyl diphosphate: step 1/1. Its function is as follows. Aristolochene synthase; part of the gene cluster that mediates the biosynthesis of PR-toxin, a bicyclic sesquiterpene belonging to the eremophilane class and acting as a mycotoxin. The first step of the pathway is catalyzed by the aristolochene synthase which performs the cyclization of trans,trans-farnesyl diphosphate (FPP) to the bicyclic sesquiterpene aristolochene. Following the formation of aristolochene, the non-oxygenated aristolochene is converted to the trioxygenated intermediate eremofortin B, via 7-epi-neopetasone. This conversion appears to involve three enzymes, a hydroxysterol oxidase-like enzyme, the quinone-oxidase prx3 that forms the quinone-type-structure in the bicyclic nucleus of aristolochene with the C8-oxo group and the C-3 hydroxyl group, and the P450 monooxygenase ORF6 that introduces the epoxide at the double bond between carbons 1 and 2. No monoxy or dioxy-intermediates have been reported to be released to the broth, so these three early oxidative reactions may be coupled together. Eremofortin B is further oxidized by another P450 monooxygenase, that introduces a second epoxide between carbons 7 and 11 prior to acetylation to eremofortin A by the acetyltransferase ORF8. The second epoxidation may be performed by a second P450 monooxygenase. After the acetylation step, eremofortin A is converted to eremofortin C and then to PR-toxin. First the conversion of eremofortin A to eremofortin C proceeds by oxidation of the side chain of the molecule at C-12 and is catalyzed by the short-chain oxidoreductase prx1. The cytochrome P450 monooxygenase ORF5 also plays a role in this step. The primary alcohol formed at C-12 is finally oxidized by the short-chain alcohol dehydrogenase prx4 that forms PR-toxin. The polypeptide is Aristolochene synthase (Penicillium roqueforti (strain FM164)).